The following is a 291-amino-acid chain: N-acetylmannosamine kinase (291 aa).

ATP-binding positions include 5 to 12 and 132 to 139; these read AIDIGGTK and GVGGGVVS. Zn(2+) is bound by residues His-156, Cys-166, Cys-168, and Cys-173.

This sequence belongs to the ROK (NagC/XylR) family. NanK subfamily. In terms of assembly, homodimer.

It carries out the reaction an N-acyl-D-mannosamine + ATP = an N-acyl-D-mannosamine 6-phosphate + ADP + H(+). It functions in the pathway amino-sugar metabolism; N-acetylneuraminate degradation; D-fructose 6-phosphate from N-acetylneuraminate: step 2/5. Its function is as follows. Catalyzes the phosphorylation of N-acetylmannosamine (ManNAc) to ManNAc-6-P. The chain is N-acetylmannosamine kinase from Escherichia coli O7:K1 (strain IAI39 / ExPEC).